We begin with the raw amino-acid sequence, 221 residues long: MKRLAGTVILSGLLVCGFGQALPEKALAAEVVHKTIVVEKGQTYDGKGKRLIAGPELGDGSQREDQKPIFKVEDGATLKNVVLGAPAADGVHTYGNASINNVVWEDVGEDALTVKSEGSVTINGGSARLAADKIFQINKASTFTVKNFTADQGGKFIRQLGGSTFKAVVNIDNCTITNMKEAIFRTDSSTSSVTMTNTRYSKVGQKWIGVKHATERNNHEF.

Positions 1–28 (MKRLAGTVILSGLLVCGFGQALPEKALA) are cleaved as a signal peptide.

This sequence belongs to the polysaccharide lyase 3 family. It depends on Ca(2+) as a cofactor.

Its subcellular location is the secreted. It carries out the reaction Eliminative cleavage of (1-&gt;4)-alpha-D-galacturonan to give oligosaccharides with 4-deoxy-alpha-D-galact-4-enuronosyl groups at their non-reducing ends.. The enzyme catalyses Eliminative cleavage of (1-&gt;4)-alpha-D-galacturonan methyl ester to give oligosaccharides with 4-deoxy-6-O-methyl-alpha-D-galact-4-enuronosyl groups at their non-reducing ends.. It participates in glycan metabolism; pectin degradation; 2-dehydro-3-deoxy-D-gluconate from pectin: step 2/5. Functionally, catalyzes the depolymerization of both polygalacturonate and pectins of methyl esterification degree from 22 to 89%, with an endo mode of action. In contrast to the majority of pectate lyases, displays high activity on highly methylated pectins. The protein is Pectate lyase C (pelC) of Bacillus licheniformis (strain ATCC 14580 / DSM 13 / JCM 2505 / CCUG 7422 / NBRC 12200 / NCIMB 9375 / NCTC 10341 / NRRL NRS-1264 / Gibson 46).